The chain runs to 391 residues: Small ribosomal subunit protein mS29 (391 aa).

A mitochondrion-targeting transit peptide spans 1 to 17; it reads MLTGITRLFSRVQKLDP. The tract at residues 30 to 59 is disordered; sequence NSQVPAERPRTVSRTSDSDPAKHGEQHEGQ. Positions 45 to 59 are enriched in basic and acidic residues; sequence SDSDPAKHGEQHEGQ. N6-acetyllysine is present on residues K168 and K200.

Belongs to the mitochondrion-specific ribosomal protein mS29 family. As to quaternary structure, component of the mitochondrial ribosome small subunit (28S) which comprises a 12S rRNA and about 30 distinct proteins. Interacts with DELE1. Interacts with NOA1.

The protein resides in the mitochondrion. The catalysed reaction is GTP + H2O = GDP + phosphate + H(+). As a component of the mitochondrial small ribosomal subunit, it plays a role in the translation of mitochondrial mRNAs. Involved in mediating interferon-gamma-induced cell death. Displays GTPase activity in vitro. This Mus musculus (Mouse) protein is Small ribosomal subunit protein mS29.